The chain runs to 187 residues: Sliding-clamp-loader small subunit (187 aa).

It belongs to the Tevenvirinae sliding-clamp-loader small subunit family. In terms of assembly, the sliding-clamp-loader consists of 4 large subunits and 1 small subunit. Interacts with the sliding clamp; this interaction allows the sliding-clamp-loader to open the sliding clamp. Part of the replicase complex that includes the DNA polymerase, the polymerase clamp, the clamp loader complex, the single-stranded DNA binding protein, the primase, the helicase and the helicase assembly factor.

Forms the sliding-clamp-loader together with the small subunit. The clamp loader holds the clamp in an open conformation and places it onto the DNA. In Escherichia coli (Bacteriophage T4), this protein is Sliding-clamp-loader small subunit (62).